The primary structure comprises 549 residues: Cation/acetate symporter ActP (549 aa).

The next 13 helical transmembrane spans lie at 33 to 53 (WQAI…TYWA), 77 to 97 (LAIA…ALVF), 103 to 123 (GLIY…LIAE), 148 to 168 (ILSA…QMVG), 183 to 203 (IAVV…GMLA), 206 to 226 (WVQI…AFMV), 262 to 282 (ISAL…PHIL), 303 to 323 (GFMG…IMLV), 355 to 375 (LFLG…VAGL), 404 to 424 (VSKI…ILFE), 428 to 448 (IAFM…PIIL), 464 to 484 (GGWL…TIWV), and 493 to 513 (IFPY…GIWF).

This sequence belongs to the sodium:solute symporter (SSF) (TC 2.A.21) family.

It localises to the cell inner membrane. Transports acetate. The polypeptide is Cation/acetate symporter ActP (Salmonella newport (strain SL254)).